A 443-amino-acid polypeptide reads, in one-letter code: D-serine dehydratase (443 aa).

The residue at position 118 (Lys118) is an N6-(pyridoxal phosphate)lysine.

It belongs to the serine/threonine dehydratase family. DsdA subfamily. In terms of assembly, monomer. Pyridoxal 5'-phosphate is required as a cofactor.

It catalyses the reaction D-serine = pyruvate + NH4(+). In Photorhabdus laumondii subsp. laumondii (strain DSM 15139 / CIP 105565 / TT01) (Photorhabdus luminescens subsp. laumondii), this protein is D-serine dehydratase.